Reading from the N-terminus, the 311-residue chain is Ribosomal RNA small subunit methyltransferase H (311 aa).

S-adenosyl-L-methionine is bound by residues Gly35–His37, Asp55, Phe80, Asp102, and Gln109.

This sequence belongs to the methyltransferase superfamily. RsmH family.

It localises to the cytoplasm. The enzyme catalyses cytidine(1402) in 16S rRNA + S-adenosyl-L-methionine = N(4)-methylcytidine(1402) in 16S rRNA + S-adenosyl-L-homocysteine + H(+). Specifically methylates the N4 position of cytidine in position 1402 (C1402) of 16S rRNA. The sequence is that of Ribosomal RNA small subunit methyltransferase H from Pseudoalteromonas atlantica (strain T6c / ATCC BAA-1087).